The primary structure comprises 75 residues: Small ribosomal subunit protein bS18 (75 aa).

Belongs to the bacterial ribosomal protein bS18 family. Part of the 30S ribosomal subunit. Forms a tight heterodimer with protein bS6.

Functionally, binds as a heterodimer with protein bS6 to the central domain of the 16S rRNA, where it helps stabilize the platform of the 30S subunit. The polypeptide is Small ribosomal subunit protein bS18 (Shewanella frigidimarina (strain NCIMB 400)).